The following is an 86-amino-acid chain: Putative membrane protein insertion efficiency factor (86 aa).

The protein belongs to the UPF0161 family.

The protein localises to the cell membrane. Its function is as follows. Could be involved in insertion of integral membrane proteins into the membrane. This is Putative membrane protein insertion efficiency factor from Streptococcus pyogenes serotype M1.